An 886-amino-acid polypeptide reads, in one-letter code: Vam6/Vps39-like protein (886 aa).

The CNH domain occupies 15-294; the sequence is PLQIDCLAAW…RFITSGGSNI (280 aa). The stretch at 573–750 is one CHCR repeat; it reads FTEDLPEVES…LLRMYLSPPS (178 aa).

The protein belongs to the VAM6/VPS39 family. As to quaternary structure, homooligomer. Interacts with TGFBR2 and, less efficiently, with TGFBR1; interaction with TGFBR2 is independent of the receptor kinase activity and of the presence of TGF-beta. Also interacts with ACVR2B, but not with BMPR2. Interacts with SMAD4, preferentially following TGF-beta treatment. Does not interact with SAMD2 or SMAD3. Component of the homotypic fusion and vacuole protein sorting (HOPS) complex; the core of which composed of the class C Vps proteins VPS11, VPS16, VPS18 and VPS33A, is associated with VPS39 and VPS41. Interacts with PLEKHM2; involved in VPS39 recruitment to ARL8B-containing lysosomes. Associates with adapter protein complex 3 (AP-3) and clathrin:AP-3 complexes. Interacts with STX17; this interaction is increased in the absence of TMEM39A. Interacts with RAB7, RAB2A and RAB2B. Interacts with RAB2A (GTP-bound); the interaction contributes to obtaining a functional HOPS complex that promotes autophagosome-lysosome membrane fusion driven by STX17-SNAP29-VAMP8. Interacts with RAB39A (GTP-bound) and RAB39B (GTP-bound); interaction with RAB39A contributes to obtaining a functional HOPS complex. In terms of assembly, (Microbial infection) Interacts with SARS coronavirus-2/SARS-CoV-2 ORF3A protein; the interaction is direct and sequestrates VPS39, thereby preventing HOPS complex from interacting with the autophagosomal SNARE protein STX17. ORF3A enhances the interaction of VPS39 with VPS11 and VPS18, while its interaction with the VPS16:VPS33A module is attenuated. Widely expressed, with highest levels in heart, skeletal muscle, kidney, pancreas, brain, placenta and spleen.

The protein localises to the cytoplasm. Its subcellular location is the lysosome membrane. The protein resides in the late endosome membrane. Regulator of TGF-beta/activin signaling, inhibiting SMAD3- and activating SMAD2-dependent transcription. Acts by interfering with SMAD3/SMAD4 complex formation, this would lead to inhibition of SMAD3-dependent transcription and relieve SMAD3 inhibition of SMAD2-dependent promoters, thus increasing SMAD2-dependent transcription. Does not affect TGF-beta-induced SMAD2 or SMAD3 phosphorylation, nor SMAD2/SMAD4 complex formation. Its function is as follows. Plays a role in vesicle-mediated protein trafficking to lysosomal compartments including the endocytic membrane transport and autophagic pathways. Acts as a component of the HOPS endosomal tethering complex. This complex is proposed to be involved in the Rab5-to-Rab7 endosome conversion probably implicating MON1A/B, and via binding SNAREs and SNARE complexes to mediate tethering and docking events during SNARE-mediated membrane fusion. The HOPS complex is proposed to be recruited to Rab7 on the late endosomal membrane and to regulate late endocytic, phagocytic and autophagic traffic towards lysosomes. Involved in homotypic vesicle fusions between late endosomes and in heterotypic fusions between late endosomes and lysosomes. Required for fusion of endosomes and autophagosomes with lysosomes. This chain is Vam6/Vps39-like protein, found in Homo sapiens (Human).